Reading from the N-terminus, the 95-residue chain is Aspartyl/glutamyl-tRNA(Asn/Gln) amidotransferase subunit C (95 aa).

Belongs to the GatC family. In terms of assembly, heterotrimer of A, B and C subunits.

It catalyses the reaction L-glutamyl-tRNA(Gln) + L-glutamine + ATP + H2O = L-glutaminyl-tRNA(Gln) + L-glutamate + ADP + phosphate + H(+). The enzyme catalyses L-aspartyl-tRNA(Asn) + L-glutamine + ATP + H2O = L-asparaginyl-tRNA(Asn) + L-glutamate + ADP + phosphate + 2 H(+). Its function is as follows. Allows the formation of correctly charged Asn-tRNA(Asn) or Gln-tRNA(Gln) through the transamidation of misacylated Asp-tRNA(Asn) or Glu-tRNA(Gln) in organisms which lack either or both of asparaginyl-tRNA or glutaminyl-tRNA synthetases. The reaction takes place in the presence of glutamine and ATP through an activated phospho-Asp-tRNA(Asn) or phospho-Glu-tRNA(Gln). In Dehalococcoides mccartyi (strain ATCC BAA-2266 / KCTC 15142 / 195) (Dehalococcoides ethenogenes (strain 195)), this protein is Aspartyl/glutamyl-tRNA(Asn/Gln) amidotransferase subunit C.